The primary structure comprises 130 residues: Insulin-like growth factor 1 (130 aa).

A signal peptide spans 1–25; sequence MHAVSSSHLFYLAFCLLVLTSSATA. The b stretch occupies residues 26-54; it reads GPETLCGAELVDALQFVCGDRGFYFNKPT. 3 disulfide bridges follow: Cys-31–Cys-73, Cys-43–Cys-86, and Cys-72–Cys-77. The interval 55–66 is c; it reads GYGSSSRRAPQT. The segment at 67–87 is a; it reads GIVDECCFRSCDLRRLEMYCA. The segment at 88-95 is d; that stretch reads PLKPAKSA. The propeptide at 96 to 130 is e peptide; the sequence is RSVRAQRHTDMPKTQKEVHLKNASRGSAGNKNYRM. The segment at 97–130 is disordered; that stretch reads SVRAQRHTDMPKTQKEVHLKNASRGSAGNKNYRM. Residues 102 to 115 show a composition bias toward basic and acidic residues; it reads RHTDMPKTQKEVHL. Residues 119-130 show a composition bias toward polar residues; that stretch reads SRGSAGNKNYRM.

Belongs to the insulin family. In terms of assembly, forms a ternary complex with IGFR1 and ITGAV:ITGB3. Forms a ternary complex with IGFR1 and ITGA6:ITGB4. Forms a ternary complex with IGFBP3 and ALS.

The protein resides in the secreted. The insulin-like growth factors, isolated from plasma, are structurally and functionally related to insulin but have a much higher growth-promoting activity. May be a physiological regulator of [1-14C]-2-deoxy-D-glucose (2DG) transport and glycogen synthesis in osteoblasts. Stimulates glucose transport in bone-derived osteoblastic (PyMS) cells and is effective at much lower concentrations than insulin, not only regarding glycogen and DNA synthesis but also with regard to enhancing glucose uptake. May play a role in synapse maturation. Ca(2+)-dependent exocytosis of IGF1 is required for sensory perception of smell in the olfactory bulb. Acts as a ligand for IGF1R. Binds to the alpha subunit of IGF1R, leading to the activation of the intrinsic tyrosine kinase activity which autophosphorylates tyrosine residues in the beta subunit thus initiating a cascade of down-stream signaling events leading to activation of the PI3K-AKT/PKB and the Ras-MAPK pathways. Binds to integrins ITGAV:ITGB3 and ITGA6:ITGB4. Its binding to integrins and subsequent ternary complex formation with integrins and IGFR1 are essential for IGF1 signaling. Induces the phosphorylation and activation of IGFR1, MAPK3/ERK1, MAPK1/ERK2 and AKT1. As part of the MAPK/ERK signaling pathway, acts as a negative regulator of apoptosis in cardiomyocytes via promotion of STUB1/CHIP-mediated ubiquitination and degradation of ICER-type isoforms of CREM. This is Insulin-like growth factor 1 from Cavia porcellus (Guinea pig).